The sequence spans 356 residues: Probable cytosolic iron-sulfur protein assembly protein 1 (356 aa).

6 WD repeats span residues 34 to 73 (GHKR…IRAE), 89 to 128 (GHDS…DYEC), 134 to 173 (EHSQ…DWYC), 179 to 218 (AHSS…ECVE), 244 to 291 (HFSG…ATLR), and 319 to 356 (AHGS…RIWT).

Belongs to the WD repeat CIA1 family.

Essential component of the cytosolic iron-sulfur (Fe/S) protein assembly machinery. Required for the maturation of extramitochondrial Fe/S proteins. This chain is Probable cytosolic iron-sulfur protein assembly protein 1, found in Malassezia globosa (strain ATCC MYA-4612 / CBS 7966) (Dandruff-associated fungus).